Consider the following 305-residue polypeptide: Aspartate carbamoyltransferase catalytic subunit (305 aa).

Carbamoyl phosphate is bound by residues arginine 56 and threonine 57. An L-aspartate-binding site is contributed by lysine 84. The carbamoyl phosphate site is built by arginine 106, histidine 136, and glutamine 139. Residues arginine 169 and arginine 221 each contribute to the L-aspartate site. Positions 262 and 263 each coordinate carbamoyl phosphate.

Belongs to the aspartate/ornithine carbamoyltransferase superfamily. ATCase family. As to quaternary structure, heterododecamer (2C3:3R2) of six catalytic PyrB chains organized as two trimers (C3), and six regulatory PyrI chains organized as three dimers (R2).

It carries out the reaction carbamoyl phosphate + L-aspartate = N-carbamoyl-L-aspartate + phosphate + H(+). Its pathway is pyrimidine metabolism; UMP biosynthesis via de novo pathway; (S)-dihydroorotate from bicarbonate: step 2/3. Catalyzes the condensation of carbamoyl phosphate and aspartate to form carbamoyl aspartate and inorganic phosphate, the committed step in the de novo pyrimidine nucleotide biosynthesis pathway. The protein is Aspartate carbamoyltransferase catalytic subunit of Streptococcus sanguinis (strain SK36).